The following is a 644-amino-acid chain: Exoribonuclease 2 (644 aa).

One can recognise an RNB domain in the interval arginine 189 to lysine 516. An S1 motif domain is found at aspartate 561–valine 643.

It belongs to the RNR ribonuclease family. RNase II subfamily.

The protein resides in the cytoplasm. The enzyme catalyses Exonucleolytic cleavage in the 3'- to 5'-direction to yield nucleoside 5'-phosphates.. Functionally, involved in mRNA degradation. Hydrolyzes single-stranded polyribonucleotides processively in the 3' to 5' direction. The chain is Exoribonuclease 2 from Shigella boydii serotype 18 (strain CDC 3083-94 / BS512).